Consider the following 100-residue polypeptide: Urease subunit gamma (100 aa).

It belongs to the urease gamma subunit family. Heterotrimer of UreA (gamma), UreB (beta) and UreC (alpha) subunits. Three heterotrimers associate to form the active enzyme.

It is found in the cytoplasm. The catalysed reaction is urea + 2 H2O + H(+) = hydrogencarbonate + 2 NH4(+). It functions in the pathway nitrogen metabolism; urea degradation; CO(2) and NH(3) from urea (urease route): step 1/1. The sequence is that of Urease subunit gamma from Rhizobium meliloti (strain 1021) (Ensifer meliloti).